The chain runs to 777 residues: Kelch domain-containing protein 7A (777 aa).

A helical transmembrane segment spans residues 21 to 38 (VVLSAAALLLVTVAYRLY). Residues 43–207 (APAQRWGGNG…GLGQLEPPHC (165 aa)) form a disordered region. Ser86 is modified (phosphoserine). The segment covering 113 to 127 (TDRKPQRKGSGEERG) has biased composition (basic and acidic residues). An N-linked (GlcNAc...) asparagine glycan is attached at Asn257. The tract at residues 313–359 (LTEVPSPRPPPGSLGTGAASGGQAGDTKGAAERAASPQTGPWPSTRG) is disordered. Residues 326 to 336 (LGTGAASGGQA) show a composition bias toward gly residues. Kelch repeat units lie at residues 328–374 (TGAA…ENPE), 492–538 (QYLV…ICSL), 541–589 (YLFV…ALDG), 590–632 (HLYA…ATVR), and 635–677 (EIFV…AVNG). Ser365 carries the post-translational modification Phosphoserine.

Its subcellular location is the membrane. The polypeptide is Kelch domain-containing protein 7A (KLHDC7A) (Homo sapiens (Human)).